The following is a 245-amino-acid chain: MTKPPVGSNRSGRKLGQKVKKGKLKASSRRWIERHINDPYVQRAQLEGYRARAAFKLLEIDEKHKILAGARRIIDLGAAPGSWSQIAAKVTNSTDTDPRVAAIDFLEMDAIPGVSFLQMDFLDPQAPEKLKEAIGGAPDIVLSDMAAPTTGHRQTDHIRTMHLCEVAAHFAVEVLAEGGHFLAKTFQGGTERDLLNMLKQNFRQVVHVKPASSRAESVEMFLLAKGFKGRHASRSDEPAEGAAEK.

A disordered region spans residues 1-26 (MTKPPVGSNRSGRKLGQKVKKGKLKA). The span at 11–26 (SGRKLGQKVKKGKLKA) shows a compositional bias: basic residues. S-adenosyl-L-methionine-binding residues include G81, W83, D104, D120, and D144. K184 (proton acceptor) is an active-site residue.

The protein belongs to the class I-like SAM-binding methyltransferase superfamily. RNA methyltransferase RlmE family.

It localises to the cytoplasm. The catalysed reaction is uridine(2552) in 23S rRNA + S-adenosyl-L-methionine = 2'-O-methyluridine(2552) in 23S rRNA + S-adenosyl-L-homocysteine + H(+). Specifically methylates the uridine in position 2552 of 23S rRNA at the 2'-O position of the ribose in the fully assembled 50S ribosomal subunit. The protein is Ribosomal RNA large subunit methyltransferase E of Sinorhizobium medicae (strain WSM419) (Ensifer medicae).